We begin with the raw amino-acid sequence, 67 residues long: DNA-directed RNA polymerase subunit omega (67 aa).

This sequence belongs to the RNA polymerase subunit omega family. As to quaternary structure, the RNAP catalytic core consists of 2 alpha, 1 beta, 1 beta' and 1 omega subunit. When a sigma factor is associated with the core the holoenzyme is formed, which can initiate transcription.

The catalysed reaction is RNA(n) + a ribonucleoside 5'-triphosphate = RNA(n+1) + diphosphate. Its function is as follows. Promotes RNA polymerase assembly. Latches the N- and C-terminal regions of the beta' subunit thereby facilitating its interaction with the beta and alpha subunits. The polypeptide is DNA-directed RNA polymerase subunit omega (Polaromonas naphthalenivorans (strain CJ2)).